Reading from the N-terminus, the 457-residue chain is tRNA modification GTPase MnmE (457 aa).

3 residues coordinate (6S)-5-formyl-5,6,7,8-tetrahydrofolate: arginine 22, glutamate 83, and arginine 122. In terms of domain architecture, TrmE-type G spans 219–378; that stretch reads GLATAIIGRP…LEEAIKTLFF (160 aa). Asparagine 229 serves as a coordination point for K(+). Residues 229–234, 248–254, and 273–276 contribute to the GTP site; these read NVGKSS, TDIAGTT, and DTAG. Serine 233 contacts Mg(2+). Residues threonine 248, isoleucine 250, and threonine 253 each contribute to the K(+) site. Threonine 254 contacts Mg(2+). Lysine 457 contributes to the (6S)-5-formyl-5,6,7,8-tetrahydrofolate binding site.

This sequence belongs to the TRAFAC class TrmE-Era-EngA-EngB-Septin-like GTPase superfamily. TrmE GTPase family. In terms of assembly, homodimer. Heterotetramer of two MnmE and two MnmG subunits. The cofactor is K(+).

Its subcellular location is the cytoplasm. Its function is as follows. Exhibits a very high intrinsic GTPase hydrolysis rate. Involved in the addition of a carboxymethylaminomethyl (cmnm) group at the wobble position (U34) of certain tRNAs, forming tRNA-cmnm(5)s(2)U34. The chain is tRNA modification GTPase MnmE from Listeria welshimeri serovar 6b (strain ATCC 35897 / DSM 20650 / CCUG 15529 / CIP 8149 / NCTC 11857 / SLCC 5334 / V8).